The chain runs to 31 residues: Cytochrome b6-f complex subunit 6 (31 aa).

Residues 4–24 (ITSYFGFLLAALTITSALFIG) traverse the membrane as a helical segment.

This sequence belongs to the PetL family. As to quaternary structure, the 4 large subunits of the cytochrome b6-f complex are cytochrome b6, subunit IV (17 kDa polypeptide, PetD), cytochrome f and the Rieske protein, while the 4 small subunits are PetG, PetL, PetM and PetN. The complex functions as a dimer.

The protein resides in the plastid. The protein localises to the chloroplast thylakoid membrane. Its function is as follows. Component of the cytochrome b6-f complex, which mediates electron transfer between photosystem II (PSII) and photosystem I (PSI), cyclic electron flow around PSI, and state transitions. PetL is important for photoautotrophic growth as well as for electron transfer efficiency and stability of the cytochrome b6-f complex. The protein is Cytochrome b6-f complex subunit 6 of Citrus sinensis (Sweet orange).